We begin with the raw amino-acid sequence, 560 residues long: NADH-quinone oxidoreductase subunit C/D (560 aa).

The segment at 2–157 (NKLENLKQLL…NNQQACTNSL (156 aa)) is NADH dehydrogenase I subunit C. The tract at residues 175–560 (KYLPLNIGPS…MNLIAGELDR (386 aa)) is NADH dehydrogenase I subunit D.

The protein in the N-terminal section; belongs to the complex I 30 kDa subunit family. This sequence in the C-terminal section; belongs to the complex I 49 kDa subunit family. As to quaternary structure, NDH-1 is composed of 13 different subunits. Subunits NuoB, CD, E, F, and G constitute the peripheral sector of the complex.

Its subcellular location is the cytoplasm. The protein localises to the cell inner membrane. The enzyme catalyses a quinone + NADH + 5 H(+)(in) = a quinol + NAD(+) + 4 H(+)(out). Functionally, NDH-1 shuttles electrons from NADH, via FMN and iron-sulfur (Fe-S) centers, to quinones in the respiratory chain. The immediate electron acceptor for the enzyme in this species is believed to be ubiquinone. Couples the redox reaction to proton translocation (for every two electrons transferred, four hydrogen ions are translocated across the cytoplasmic membrane), and thus conserves the redox energy in a proton gradient. The sequence is that of NADH-quinone oxidoreductase subunit C/D from Bdellovibrio bacteriovorus (strain ATCC 15356 / DSM 50701 / NCIMB 9529 / HD100).